Here is a 359-residue protein sequence, read N- to C-terminus: Endoglucanase 1 (359 aa).

Disordered regions lie at residues 1 to 26 (MENP…RGGR) and 47 to 72 (TGAS…DAGT). The span at 13–24 (LRRRRSERRARG) shows a compositional bias: basic residues. Residues 60–72 (APSADSGTADAGT) are compositionally biased toward low complexity. The active site involves Asp154. Cys155 and Cys199 are oxidised to a cystine. Catalysis depends on Asp192, which acts as the Proton donor. Residue Asp339 is the Nucleophile of the active site.

Belongs to the glycosyl hydrolase 6 (cellulase B) family.

It carries out the reaction Endohydrolysis of (1-&gt;4)-beta-D-glucosidic linkages in cellulose, lichenin and cereal beta-D-glucans.. Its function is as follows. CMCase I preferentially hydrolyzes carboxymethyl cellulose (CMC). The protein is Endoglucanase 1 (casA) of Streptomyces sp. (strain KSM-9).